Here is a 65-residue protein sequence, read N- to C-terminus: Large ribosomal subunit protein bL35 (65 aa).

The segment at 1–51 (MPKIKTNRGAAKRFRKSASGRVKRGNAFTSHILTHKTRKNKRNLRGTSMVS) is disordered. Composition is skewed to basic residues over residues 10–24 (AAKR…RVKR) and 33–44 (LTHKTRKNKRNL).

This sequence belongs to the bacterial ribosomal protein bL35 family.

This is Large ribosomal subunit protein bL35 from Pelobacter propionicus (strain DSM 2379 / NBRC 103807 / OttBd1).